The chain runs to 220 residues: MKLNKYIDHTLLKQDATKAEIKQLCDEAIEFDFATVCVNSYWTSYCKELLKGTNVGITNVVGFPLGACTTATKAFEVSEAIKDGATEIDMVLNIGALKDKNYELVLEDMKAVKKAAGSHVVKCIMENCLLTKEEIMKACEIAVEAGLEFVKTSTGFSKSGATFEDVKLMKSVVKDNALVKAAGGVRTFEDAQKMIEAGADRLGTSGGVAIIKGEENNASY.

Asp89 serves as the catalytic Proton donor/acceptor. The active-site Schiff-base intermediate with acetaldehyde is Lys151. The active-site Proton donor/acceptor is Lys180.

It belongs to the DeoC/FbaB aldolase family. DeoC type 1 subfamily.

It localises to the cytoplasm. The catalysed reaction is 2-deoxy-D-ribose 5-phosphate = D-glyceraldehyde 3-phosphate + acetaldehyde. Its pathway is carbohydrate degradation; 2-deoxy-D-ribose 1-phosphate degradation; D-glyceraldehyde 3-phosphate and acetaldehyde from 2-deoxy-alpha-D-ribose 1-phosphate: step 2/2. Its function is as follows. Catalyzes a reversible aldol reaction between acetaldehyde and D-glyceraldehyde 3-phosphate to generate 2-deoxy-D-ribose 5-phosphate. This is Deoxyribose-phosphate aldolase 1 from Mesoplasma florum (strain ATCC 33453 / NBRC 100688 / NCTC 11704 / L1) (Acholeplasma florum).